An 81-amino-acid polypeptide reads, in one-letter code: Photosystem I iron-sulfur center (81 aa).

4Fe-4S ferredoxin-type domains follow at residues 2 to 31 (SHSV…MIPW) and 39 to 68 (IASA…VRVY). Cysteine 11, cysteine 14, cysteine 17, cysteine 21, cysteine 48, cysteine 51, cysteine 54, and cysteine 58 together coordinate [4Fe-4S] cluster.

As to quaternary structure, the eukaryotic PSI reaction center is composed of at least 11 subunits. The cofactor is [4Fe-4S] cluster.

It is found in the plastid. The protein resides in the chloroplast thylakoid membrane. It carries out the reaction reduced [plastocyanin] + hnu + oxidized [2Fe-2S]-[ferredoxin] = oxidized [plastocyanin] + reduced [2Fe-2S]-[ferredoxin]. In terms of biological role, apoprotein for the two 4Fe-4S centers FA and FB of photosystem I (PSI); essential for photochemical activity. FB is the terminal electron acceptor of PSI, donating electrons to ferredoxin. The C-terminus interacts with PsaA/B/D and helps assemble the protein into the PSI complex. Required for binding of PsaD and PsaE to PSI. PSI is a plastocyanin-ferredoxin oxidoreductase, converting photonic excitation into a charge separation, which transfers an electron from the donor P700 chlorophyll pair to the spectroscopically characterized acceptors A0, A1, FX, FA and FB in turn. This Vitis vinifera (Grape) protein is Photosystem I iron-sulfur center.